A 581-amino-acid polypeptide reads, in one-letter code: Sulfate adenylyltransferase (581 aa).

Positions 1-176 (MANAPHGGVL…VQAIQAPTHF (176 aa)) are N-terminal. The interval 177-401 (DYVPLRFTPA…LRESYPPRPQ (225 aa)) is catalytic. Residue Gln-204 coordinates sulfate. ATP is bound by residues 204–207 (QTRN) and 298–301 (GRDH). Catalysis depends on residues Thr-205, Arg-206, and Asn-207. Arg-206 lines the sulfate pocket. Ala-302 contributes to the sulfate binding site. An ATP-binding site is contributed by Met-340. Residues 402–581 (QGFTILLTGL…IMILESQNLV (180 aa)) are allosteric regulation domain; adenylyl-sulfate kinase-like. Residues 441 to 444 (EELR), 486 to 487 (TA), and Arg-526 each bind 3'-phosphoadenylyl sulfate.

The protein in the N-terminal section; belongs to the sulfate adenylyltransferase family. In the C-terminal section; belongs to the APS kinase family. Homohexamer. Dimer of trimers.

The protein localises to the cytoplasm. The enzyme catalyses sulfate + ATP + H(+) = adenosine 5'-phosphosulfate + diphosphate. Its pathway is sulfur metabolism; hydrogen sulfide biosynthesis; sulfite from sulfate: step 1/3. With respect to regulation, allosterically inhibited by 3'-phosphoadenosine 5'-phosphosulfate (PAPS). In terms of biological role, catalyzes the first intracellular reaction of sulfate assimilation, forming adenosine-5'-phosphosulfate (APS) from inorganic sulfate and ATP. Plays an important role in sulfate activation as a component of the biosynthesis pathway of sulfur-containing amino acids. This is Sulfate adenylyltransferase from Cryptococcus neoformans var. neoformans serotype D (strain B-3501A) (Filobasidiella neoformans).